Here is a 192-residue protein sequence, read N- to C-terminus: Leucine-rich repeat-containing protein 51 (192 aa).

LRR repeat units lie at residues 49 to 71 (SLTQ…NQVV), 80 to 101 (NLAW…LTTF), and 103 to 124 (NLSV…NKLA). In terms of domain architecture, LRRCT spans 137–175 (NPIEEEKGYRQYVLCNLPRITTFDFSGVTRADRSTAEVW).

In terms of tissue distribution, widely expressed in adult and embryonic tissues. Expressed in the developing choroid plexus from 12.5 dpc and in the epithelium of the developing airway tract from 14.5 dpc. Also expressed in the postnatal inner ear.

It is found in the cytoplasm. This chain is Leucine-rich repeat-containing protein 51, found in Mus musculus (Mouse).